Here is a 500-residue protein sequence, read N- to C-terminus: Cytochrome P450 81F1 (500 aa).

A helical transmembrane segment spans residues 1–21 (MLYFILLPLLFLVISYKFLYS). Lys-248 is covalently cross-linked (Glycyl lysine isopeptide (Lys-Gly) (interchain with G-Cter in ubiquitin)). Cys-438 lines the heme pocket.

It belongs to the cytochrome P450 family. It depends on heme as a cofactor.

Its subcellular location is the membrane. It participates in secondary metabolite biosynthesis. In terms of biological role, involved in indole glucosinolate biosynthesis. Catalyzes hydroxylation reactions of the glucosinolate indole ring. Converts indol-3-yl-methylglucosinolate (I3M) to 4-hydroxy-indol-3-yl-methylglucosinolate (4OH-I3M) and/or 1-hydroxy-indol-3-yl-methylglucosinolate (1OH-I3M) intermediates. These hydroxy intermediates are converted to 4-methoxy-indol-3-yl-methylglucosinolate (4MO-I3M) and 1-methoxy-indol-3-yl-methylglucosinolate (1MO-I3M) by indole glucosinolate methyltransferase 1 and 2 (IGMT1 and IGMT2). The protein is Cytochrome P450 81F1 of Arabidopsis thaliana (Mouse-ear cress).